We begin with the raw amino-acid sequence, 206 residues long: Thymidylate kinase (206 aa).

7–14 lines the ATP pocket; that stretch reads GGEGVGKT.

It belongs to the thymidylate kinase family.

It carries out the reaction dTMP + ATP = dTDP + ADP. Functionally, phosphorylation of dTMP to form dTDP in both de novo and salvage pathways of dTTP synthesis. The sequence is that of Thymidylate kinase from Synechococcus sp. (strain JA-2-3B'a(2-13)) (Cyanobacteria bacterium Yellowstone B-Prime).